Consider the following 652-residue polypeptide: Sodium-dependent phosphate transporter 1-A (652 aa).

Over Met-1–Asp-25 the chain is Cytoplasmic. Residues Val-26 to Ala-46 traverse the membrane as a helical segment. Over Asn-47–Gln-66 the chain is Extracellular. Residues Ala-67–Ser-87 form a helical membrane-spanning segment. Residues Glu-88 to Glu-104 are Cytoplasmic-facing. Residues Ala-105–Ala-125 form a helical membrane-spanning segment. Residues Ser-126–Arg-162 lie on the Extracellular side of the membrane. Residues Ile-163–Tyr-183 traverse the membrane as a helical segment. Topologically, residues Phe-184–Arg-201 are cytoplasmic. A helical membrane pass occupies residues Ala-202–Gly-222. The Extracellular portion of the chain corresponds to Ala-223–Trp-234. A helical transmembrane segment spans residues Gly-235–Val-255. Over Cys-256–Glu-482 the chain is Cytoplasmic. The tract at residues Thr-278–Pro-308 is disordered. The segment covering Val-281–Pro-295 has biased composition (basic and acidic residues). The span at Pro-297–Pro-308 shows a compositional bias: pro residues. The chain crosses the membrane as a helical span at residues Val-483–Gly-503. The Extracellular portion of the chain corresponds to Gly-504–Pro-531. A helical membrane pass occupies residues Thr-532–Gly-552. The Cytoplasmic portion of the chain corresponds to Arg-553–Gly-571. Residues Phe-572–Val-592 form a helical membrane-spanning segment. The Extracellular segment spans residues Ser-593–Asn-621. Residues Ile-622 to Ala-642 traverse the membrane as a helical segment. The Cytoplasmic segment spans residues Leu-643–Thr-652.

Belongs to the inorganic phosphate transporter (PiT) (TC 2.A.20) family.

It localises to the membrane. In terms of biological role, sodium-phosphate symporter which plays a fundamental housekeeping role in phosphate transport. The protein is Sodium-dependent phosphate transporter 1-A (slc20a1a) of Danio rerio (Zebrafish).